Here is a 341-residue protein sequence, read N- to C-terminus: tRNA (cytidine(56)-2'-O)-methyltransferase (341 aa).

Residues Leu-79 and 104–108 (GAEKV) each bind S-adenosyl-L-methionine. Residues 187 to 294 (IIRHVETVYK…VAHADNLVSM (108 aa)) enclose the HD domain.

This sequence belongs to the aTrm56 family. In terms of assembly, homodimer.

It localises to the cytoplasm. The enzyme catalyses cytidine(56) in tRNA + S-adenosyl-L-methionine = 2'-O-methylcytidine(56) in tRNA + S-adenosyl-L-homocysteine + H(+). Functionally, specifically catalyzes the AdoMet-dependent 2'-O-ribose methylation of cytidine at position 56 in tRNAs. This is tRNA (cytidine(56)-2'-O)-methyltransferase from Picrophilus torridus (strain ATCC 700027 / DSM 9790 / JCM 10055 / NBRC 100828 / KAW 2/3).